Here is a 313-residue protein sequence, read N- to C-terminus: Olfactory receptor 1f45 (313 aa).

Topologically, residues 1–25 are extracellular; the sequence is MSSTNQSSVTEFLLLGLSRQPQQQQ. Asparagine 5 carries N-linked (GlcNAc...) asparagine glycosylation. A helical transmembrane segment spans residues 26–50; it reads LLFLLFLIMYLATVLGNLLIILAIG. At 51–57 the chain is on the cytoplasmic side; sequence TDSRLHT. Residues 58-79 traverse the membrane as a helical segment; sequence PMYFFLSNLSFVDVCFSSTTVP. At 80–100 the chain is on the extracellular side; the sequence is KVLANHILGSQAISFSGCLTQ. Cysteine 97 and cysteine 189 are disulfide-bonded. Residues 101-120 traverse the membrane as a helical segment; that stretch reads LYFLAVFGNMDNFLLAVMSY. The Cytoplasmic portion of the chain corresponds to 121–139; it reads DRFVAICHPLHYTTKMTRQ. The chain crosses the membrane as a helical span at residues 140-158; sequence LCVLLVVGSWVVANMNCLL. Topologically, residues 159–196 are extracellular; that stretch reads HILLMARLSFCADNMIPHFFCDGTPLLKLSCSDTHLNE. Residues 197–219 traverse the membrane as a helical segment; that stretch reads LMILTEGAVVMVTPFVCILISYI. Residues 220–236 lie on the Cytoplasmic side of the membrane; that stretch reads HITCAVLRVSSPRGGWK. The helical transmembrane segment at 237–260 threads the bilayer; it reads SFSTCGSHLAVVCLFYGTVIAVYF. At 261 to 272 the chain is on the extracellular side; the sequence is NPSSSHLAGRDM. A helical transmembrane segment spans residues 273 to 292; sequence AAAVMYAVVTPMLNPFIYSL. At 293–313 the chain is on the cytoplasmic side; it reads RNSDMKAALRKVLAMRFPSKQ.

The protein belongs to the G-protein coupled receptor 1 family. As to expression, olfactory epithelium.

Its subcellular location is the cell membrane. Odorant receptor. This chain is Olfactory receptor 1f45 (Or1f45), found in Rattus norvegicus (Rat).